Consider the following 225-residue polypeptide: Uridylate kinase (225 aa).

7–11 (KISGS) serves as a coordination point for ATP. UMP is bound at residue G44. Residues G45 and R49 each contribute to the ATP site. Residues D66 and 114 to 120 (FQPGQST) each bind UMP. Residues Y147 and E150 each coordinate ATP.

This sequence belongs to the UMP kinase family. As to quaternary structure, homohexamer.

Its subcellular location is the cytoplasm. It catalyses the reaction UMP + ATP = UDP + ADP. The protein operates within pyrimidine metabolism; CTP biosynthesis via de novo pathway; UDP from UMP (UMPK route): step 1/1. Inhibited by UTP. Its function is as follows. Catalyzes the reversible phosphorylation of UMP to UDP. The polypeptide is Uridylate kinase (Aeropyrum pernix (strain ATCC 700893 / DSM 11879 / JCM 9820 / NBRC 100138 / K1)).